Reading from the N-terminus, the 300-residue chain is Formate dehydrogenase-O iron-sulfur subunit (300 aa).

Residues 1 to 260 lie on the Cytoplasmic side of the membrane; it reads MAYQSQDIIR…KFWKGIWKPL (260 aa). 4Fe-4S ferredoxin-type domains are found at residues 30-60, 91-123, 124-153, and 158-189; these read VAKL…DTVG, LEWL…QYAN, GIVD…LNPE, and YKCT…FGTK. [4Fe-4S] cluster is bound by residues C39, C42, C45, C49, C100, C103, C108, C112, C133, C136, C139, C143, C160, C163, C175, and C179. Residues 261–279 form a helical membrane-spanning segment; it reads AAVGFAATFAASIFHYVGV. Over 280–300 the chain is Periplasmic; the sequence is GPNRADEEENNLHEEKDEERK.

In terms of assembly, formate dehydrogenase is a membrane-bound complex, formed by subunits alpha, beta and gamma. [4Fe-4S] cluster serves as cofactor.

Its subcellular location is the cell membrane. Allows to use formate as major electron donor during aerobic respiration. The beta chain is an electron transfer unit containing 4 cysteine clusters involved in the formation of iron-sulfur centers. Electrons are transferred from the gamma chain to the molybdenum cofactor of the alpha subunit. In Escherichia coli (strain K12), this protein is Formate dehydrogenase-O iron-sulfur subunit (fdoH).